Reading from the N-terminus, the 410-residue chain is Metal tolerance protein 3 (410 aa).

The tract at residues 1–58 (MDGDDRRTPLLGGEGGSTRPPSLRRRDSARSLRSTFLSRLPDKVRGGGDPERPAADVD) is disordered. Residues 1-114 (MDGDDRRTPL…EDKEQKQSES (114 aa)) lie on the Cytoplasmic side of the membrane. Residues 40 to 58 (LPDKVRGGGDPERPAADVD) show a composition bias toward basic and acidic residues. The chain crosses the membrane as a helical span at residues 115–135 (AMKISNYANIILLVFKVYATI). Residues 136 to 140 (KTGSM) are Vacuolar-facing. A helical membrane pass occupies residues 141 to 161 (AIAASTLDSLLDFLAGGILYF). Over 162–184 (THLTMKSVNIYKYPIGKLRVQPV) the chain is Cytoplasmic. A helical transmembrane segment spans residues 185 to 205 (GIIVFAAIMATLGFQVLIQAI). Residues 206-221 (EQLVENKAGEKMTPEQ) are Vacuolar-facing. A helical membrane pass occupies residues 222-242 (LIWLYSIMLSATVVKLALYIY). Residues 243 to 258 (CRSSGNSIVQAYAKDH) are Cytoplasmic-facing. A helical membrane pass occupies residues 259–275 (YFDVVTNVVGLVAAVLG). The Vacuolar portion of the chain corresponds to 276–284 (DKFFWWIDP). Residues 285-303 (VGAVLLAVYTIVNWSGTVY) traverse the membrane as a helical segment. Over 304-410 (ENAVTLVGQC…VRSRLPSTEP (107 aa)) the chain is Cytoplasmic.

This sequence belongs to the cation diffusion facilitator (CDF) transporter (TC 2.A.4) family. SLC30A subfamily.

It is found in the vacuole membrane. Involved in sequestration of excess metal in the cytoplasm into vacuoles to maintain metal homeostasis. The chain is Metal tolerance protein 3 (MTP3) from Oryza sativa subsp. japonica (Rice).